Consider the following 2426-residue polypeptide: Protein SON (2426 aa).

A2 is subject to N-acetylalanine. K16 carries the post-translational modification N6-acetyllysine. Positions L24–E42 are enriched in polar residues. Residues L24–L56 form a disordered region. K64 participates in a covalent cross-link: Glycyl lysine isopeptide (Lys-Gly) (interchain with G-Cter in SUMO2). The span at L77–R88 shows a compositional bias: basic and acidic residues. Residues L77–F155 are disordered. S94 is subject to Phosphoserine. The span at K106–K130 shows a compositional bias: basic residues. Over residues R131–G146 the composition is skewed to basic and acidic residues. Phosphoserine occurs at positions 142, 152, 154, 160, and 283. An N6-acetyllysine modification is found at K288. The segment at T305 to F328 is disordered. T400 carries the post-translational modification Phosphothreonine. A disordered region spans residues P406–S442. Residues S409 to S442 are compositionally biased toward pro residues. The tract at residues L726–M895 is 17 X 10 AA tandem repeats of L-A-[ST]-[NSG]-[TS]-MDSQM. An 11 X 7 AA tandem repeats of [DR]-P-Y-R-[LI][AG][QHP] region spans residues D912 to P988. R950 is modified (omega-N-methylarginine). A Phosphothreonine modification is found at T959. S998 is modified (phosphoserine). 14 tandem repeats follow at residues E1006–S1011, E1014–S1019, E1021–S1026, E1030–S1035, E1038–S1043, E1046–S1051, E1055–S1060, E1063–S1068, E1071–S1076, D1080–S1085, D1089–S1094, D1100–S1105, D1111–S1116, and D1121–S1126. Residues E1006–S1126 form a 14 X 6 AA repeats of [ED]-R-S-M-M-S region. At R1007 the chain carries Asymmetric dimethylarginine. An Asymmetric dimethylarginine modification is found at R1022. 2 positions are modified to phosphoserine: S1035 and S1043. Residues S1060 and S1068 each carry the phosphoserine modification. At S1082 the chain carries Phosphoserine. Positions Y1144–D1236 are disordered. The interval P1147–G1179 is 3 X 11 AA tandem repats of P-P-L-P-P-E-E-P-P-[TME]-[MTG]. Positions P1147–P1180 are enriched in pro residues. Positions Q1186–P1196 are enriched in polar residues. Low complexity predominate over residues E1198 to S1224. The 4 X 8 AA tandem repeats of V-L-E-SS-[AVT]-VT stretch occupies residues V1359–T1390. S1556 and S1651 each carry phosphoserine. The tract at residues T1645 to S1722 is disordered. Basic and acidic residues predominate over residues K1677 to D1689. Phosphoserine is present on residues S1697, S1701, S1747, S1759, S1766, S1769, S1782, and S1783. Residues G1754–D2054 are disordered. Basic and acidic residues-rich tracts occupy residues Y1790 to E1801, R1809 to L1822, and K1830 to S1845. 2 stretches are compositionally biased toward basic residues: residues R1846 to S1909 and T1917 to S1948. A run of 9 repeats spans residues P1925–S1931, P1934–S1952, P1953–T1959, P1960–T1966, P1967–T1973, P1974–T1980, P1981–T1987, P1988–T1994, and P1995–S2013. The tract at residues P1925–T1994 is 7 X 7 AA repeats of P-S-R-R-S-R-[TS]. The interval P1934–S2013 is 2 X 19 AA repeats of P-S-R-R-R-R-S-R-S-V-V-R-R-R-S-F-S-I-S. Phosphoserine is present on residues S1948, S1950, and S1952. Basic residues predominate over residues R1955–S2009. S2009, S2011, S2013, S2029, and S2031 each carry phosphoserine. Positions S2013–R2039 are 3 X tandem repeats of [ST]-P-[VLI]-R-[RL]-[RK]-[RF]-S-R. Residues R2016–S2038 show a composition bias toward basic residues. Over residues R2039–D2054 the composition is skewed to basic and acidic residues. K2055 is subject to N6-acetyllysine; alternate. A Glycyl lysine isopeptide (Lys-Gly) (interchain with G-Cter in SUMO2); alternate cross-link involves residue K2055. A Glycyl lysine isopeptide (Lys-Gly) (interchain with G-Cter in SUMO2) cross-link involves residue K2092. S2129 carries the phosphoserine modification. K2149 is covalently cross-linked (Glycyl lysine isopeptide (Lys-Gly) (interchain with G-Cter in SUMO2)). T2163 carries the post-translational modification Phosphothreonine. The tract at residues K2200 to P2220 is disordered. At S2238 the chain carries Phosphoserine. The G-patch domain maps to T2305 to E2351. Positions H2371–Y2426 constitute a DRBM domain.

In terms of assembly, interacts with SRSF2. Associates with the spliceosome. Interacts with the AML1-MTG8 (AML1-ETO) fusion protein, possibly leading to trigger signals inhibiting leukemogenesis. Interacts with USH1G. As to expression, widely expressed, with the higher expression seen in leukocyte and heart.

Its subcellular location is the nucleus speckle. Functionally, RNA-binding protein that acts as a mRNA splicing cofactor by promoting efficient splicing of transcripts that possess weak splice sites. Specifically promotes splicing of many cell-cycle and DNA-repair transcripts that possess weak splice sites, such as TUBG1, KATNB1, TUBGCP2, AURKB, PCNT, AKT1, RAD23A, and FANCG. Probably acts by facilitating the interaction between Serine/arginine-rich proteins such as SRSF2 and the RNA polymerase II. Also binds to DNA; binds to the consensus DNA sequence: 5'-GA[GT]AN[CG][AG]CC-3'. May indirectly repress hepatitis B virus (HBV) core promoter activity and transcription of HBV genes and production of HBV virions. Essential for correct RNA splicing of multiple genes critical for brain development, neuronal migration and metabolism, including TUBG1, FLNA, PNKP, WDR62, PSMD3, PCK2, PFKL, IDH2, and ACY1. The protein is Protein SON (SON) of Homo sapiens (Human).